The chain runs to 233 residues: Orotate phosphoribosyltransferase (233 aa).

Lysine 29 contacts 5-phospho-alpha-D-ribose 1-diphosphate. 37–38 (FF) lines the orotate pocket. 5-phospho-alpha-D-ribose 1-diphosphate-binding positions include 79-80 (YK), arginine 109, lysine 110, lysine 113, histidine 115, and 135-143 (DDVITAGTA). Residues threonine 139 and arginine 167 each contribute to the orotate site.

This sequence belongs to the purine/pyrimidine phosphoribosyltransferase family. PyrE subfamily. Homodimer.

It catalyses the reaction orotidine 5'-phosphate + diphosphate = orotate + 5-phospho-alpha-D-ribose 1-diphosphate. It functions in the pathway pyrimidine metabolism; UMP biosynthesis via de novo pathway; UMP from orotate: step 1/2. Catalyzes the transfer of a ribosyl phosphate group from 5-phosphoribose 1-diphosphate to orotate, leading to the formation of orotidine monophosphate (OMP). The protein is Orotate phosphoribosyltransferase (ura-5) of Neurospora crassa (strain ATCC 24698 / 74-OR23-1A / CBS 708.71 / DSM 1257 / FGSC 987).